The chain runs to 271 residues: DNA-directed RNA polymerase subunit Rpo3 (271 aa).

Belongs to the archaeal Rpo3/eukaryotic RPB3 RNA polymerase subunit family. As to quaternary structure, part of the RNA polymerase complex.

Its subcellular location is the cytoplasm. It catalyses the reaction RNA(n) + a ribonucleoside 5'-triphosphate = RNA(n+1) + diphosphate. Functionally, DNA-dependent RNA polymerase (RNAP) catalyzes the transcription of DNA into RNA using the four ribonucleoside triphosphates as substrates. The polypeptide is DNA-directed RNA polymerase subunit Rpo3 (Picrophilus torridus (strain ATCC 700027 / DSM 9790 / JCM 10055 / NBRC 100828 / KAW 2/3)).